Consider the following 162-residue polypeptide: Nucleotide-binding protein Adeh_0094 (162 aa).

This sequence belongs to the YajQ family.

Functionally, nucleotide-binding protein. In Anaeromyxobacter dehalogenans (strain 2CP-C), this protein is Nucleotide-binding protein Adeh_0094.